We begin with the raw amino-acid sequence, 119 residues long: Class I hydrophobin 2 (119 aa).

An N-terminal signal peptide occupies residues 1–22; sequence MFARISTIITTLFFAMLAAATA. 4 cysteine pairs are disulfide-bonded: cysteine 36–cysteine 97, cysteine 45–cysteine 91, cysteine 46–cysteine 79, and cysteine 98–cysteine 112.

It belongs to the fungal hydrophobin family. As to quaternary structure, self-assembles to form functional amyloid fibrils called rodlets. Self-assembly into fibrillar rodlets occurs spontaneously at hydrophobic:hydrophilic interfaces and the rodlets further associate laterally to form amphipathic monolayers.

The protein localises to the secreted. It is found in the cell wall. Aerial growth, conidiation, and dispersal of filamentous fungi in the environment rely upon a capability of their secreting small amphipathic proteins called hydrophobins (HPBs) with low sequence identity. Class I can self-assemble into an outermost layer of rodlet bundles on aerial cell surfaces, conferring cellular hydrophobicity that supports fungal growth, development and dispersal; whereas Class II form highly ordered films at water-air interfaces through intermolecular interactions but contribute nothing to the rodlet structure. Abh2 is a class I hydrophobin involved in the emergence of aerial hyphae and strands. The polypeptide is Class I hydrophobin 2 (Agaricus bisporus (White button mushroom)).